Reading from the N-terminus, the 176-residue chain is Adenine phosphoribosyltransferase (176 aa).

Belongs to the purine/pyrimidine phosphoribosyltransferase family. Homodimer.

The protein localises to the cytoplasm. It catalyses the reaction AMP + diphosphate = 5-phospho-alpha-D-ribose 1-diphosphate + adenine. It functions in the pathway purine metabolism; AMP biosynthesis via salvage pathway; AMP from adenine: step 1/1. In terms of biological role, catalyzes a salvage reaction resulting in the formation of AMP, that is energically less costly than de novo synthesis. The chain is Adenine phosphoribosyltransferase from Thermobifida fusca (strain YX).